Consider the following 942-residue polypeptide: AP-1 complex subunit beta (942 aa).

6 HEAT repeats span residues 45 to 82 (KDVS…NHPD), 117 to 154 (NITE…VNPE), 156 to 193 (VENQ…VSKK), 273 to 313 (DVIR…KRPE), 384 to 421 (RASE…KYPN), and 458 to 495 (DNAH…KRPK). Positions 590-700 (GLRNKEEEDE…NDLSFLGGGG (111 aa)) are disordered. Acidic residues predominate over residues 596 to 609 (EEDEEEPDYVDDDN). 2 stretches are compositionally biased toward low complexity: residues 613–645 (QQGG…QQQP) and 664–677 (NNNN…NNNN). The span at 678 to 693 (MYSPQPQQFNGNSNDL) shows a compositional bias: polar residues.

Belongs to the adaptor complexes large subunit family. In terms of assembly, adaptor protein complex 1 (AP-1) is a heterotetramer composed of two large adaptins (gamma-type subunit and beta-type subunit), a medium adaptin (mu-type subunit) and a small adaptin (sigma-type subunit).

Its subcellular location is the golgi apparatus. It localises to the trans-Golgi network. The protein resides in the cytoplasmic vesicle. It is found in the clathrin-coated vesicle membrane. Functionally, subunit of clathrin-associated adaptor protein complex 1 that plays a role in protein sorting in the trans-Golgi network (TGN) and endosomes. The AP complexes mediate the recruitment of clathrin to membranes and the recognition of sorting signals within the cytosolic tails of transmembrane cargo molecules. Also involved in early steps of phagocytosis and macropinocytosis. This is AP-1 complex subunit beta (ap1b1) from Dictyostelium discoideum (Social amoeba).